The sequence spans 405 residues: Arginine deiminase (405 aa).

Residue Cys-395 is the Amidino-cysteine intermediate of the active site.

Belongs to the arginine deiminase family.

The protein resides in the cytoplasm. It catalyses the reaction L-arginine + H2O = L-citrulline + NH4(+). Its pathway is amino-acid degradation; L-arginine degradation via ADI pathway; carbamoyl phosphate from L-arginine: step 1/2. In Rhodococcus opacus (strain B4), this protein is Arginine deiminase.